The primary structure comprises 466 residues: Small RNA degrading nuclease 2 (466 aa).

One can recognise an Exonuclease domain in the interval 142 to 298 (MIAIDCEMVL…HDAEAAMKLV (157 aa)). A disordered region spans residues 426–466 (EENNASSKKRKRENHSKGTRDRRRCKPLSRRKQRSNVKRRR). Residues 445 to 466 (RDRRRCKPLSRRKQRSNVKRRR) are compositionally biased toward basic residues.

This sequence belongs to the REXO1/REXO3 family.

The protein resides in the nucleus. In terms of biological role, 3'-5' exonuclease degrading single-stranded small RNAs. This is Small RNA degrading nuclease 2 (SDN2) from Arabidopsis thaliana (Mouse-ear cress).